The following is a 152-amino-acid chain: Transcriptional regulator MraZ (152 aa).

SpoVT-AbrB domains follow at residues 5–52 (ASAI…PLEA) and 81–124 (AHEC…DEAA).

Belongs to the MraZ family. As to quaternary structure, forms oligomers.

It is found in the cytoplasm. The protein localises to the nucleoid. This chain is Transcriptional regulator MraZ, found in Shewanella loihica (strain ATCC BAA-1088 / PV-4).